The primary structure comprises 335 residues: MAQRISLTRYLVEQQRVDGLIPSQLRLLLEVVARACKHISHAVNKGALGGVLGSASSENVQGEIQKKLDIIANEVLIEANEWGGHLAAMASEEMDSIYVVPNRYPQGEYLLLFDPLDGSSNIDVNVSIGTIFSVLKKPEGHPGVTTEDFLQAGSSQVAAGYCIYGPQTTLVLTVGDGVAMFTLDREQGSFVLVEENVKIPADTREFAINMSNMRHWDAPVKRYIDECLAGTEGPREKDFNMRWIASMVADVHRILTRGGIFLYPWDKREPNKPGKLRLMYEANPMSWLIEQAGGAATNGKERILDIQPKQLHERVSVILGSKNEVERVTRYHSGI.

Mg(2+) is bound by residues Glu-92, Asp-114, Leu-116, and Asp-117. Substrate is bound by residues 117–120 (DGSS), Asn-209, and Lys-275. Residue Glu-281 participates in Mg(2+) binding.

The protein belongs to the FBPase class 1 family. In terms of assembly, homotetramer. Mg(2+) is required as a cofactor.

The protein localises to the cytoplasm. It catalyses the reaction beta-D-fructose 1,6-bisphosphate + H2O = beta-D-fructose 6-phosphate + phosphate. It participates in carbohydrate biosynthesis; gluconeogenesis. This chain is Fructose-1,6-bisphosphatase class 1, found in Paracidovorax citrulli (strain AAC00-1) (Acidovorax citrulli).